The sequence spans 173 residues: Adenine phosphoribosyltransferase (173 aa).

The protein belongs to the purine/pyrimidine phosphoribosyltransferase family. Homodimer.

The protein resides in the cytoplasm. It catalyses the reaction AMP + diphosphate = 5-phospho-alpha-D-ribose 1-diphosphate + adenine. The protein operates within purine metabolism; AMP biosynthesis via salvage pathway; AMP from adenine: step 1/1. Its function is as follows. Catalyzes a salvage reaction resulting in the formation of AMP, that is energically less costly than de novo synthesis. The protein is Adenine phosphoribosyltransferase of Ureaplasma parvum serovar 3 (strain ATCC 27815 / 27 / NCTC 11736).